The primary structure comprises 554 residues: Valerianol synthase TPS1G (554 aa).

Mg(2+) contacts are provided by D307 and D311. The short motif at V326–D330 is the DDXXD motif element. Mg(2+) contacts are provided by D452, S456, and E460.

It belongs to the terpene synthase family. Mg(2+) is required as a cofactor.

The catalysed reaction is (2E,6E)-farnesyl diphosphate + H2O = valerianol + diphosphate. It functions in the pathway secondary metabolite biosynthesis; terpenoid biosynthesis. Functionally, terpene synthase that catalyzes the biosynthesis of the terpene valerianol, which is a volatile compound of floral scent. The chain is Valerianol synthase TPS1G from Camellia hiemalis (Camellia).